A 525-amino-acid chain; its full sequence is uncharacterized protein (525 aa).

2 helical membrane-spanning segments follow: residues 36–56 and 61–81; these read AVAA…TLAL and ALPA…AAAI. A PAC domain is found at 173 to 228; the sequence is SAVDIRLERTSADGPQFAHIYCEMTPLRDAEGNLLAIVAQSRDVSEEARLQAEAAA. In terms of domain architecture, Histidine kinase spans 246–466; it reads AVSHELRTPL…VIVVTIPSDA (221 aa). At histidine 249 the chain carries Phosphohistidine; by autocatalysis. The segment at 506–525 is disordered; the sequence is LHTGEIGREGGHGAAQAKTA.

The protein localises to the cell membrane. It catalyses the reaction ATP + protein L-histidine = ADP + protein N-phospho-L-histidine.. This is an uncharacterized protein from Rhizobium meliloti (strain 1021) (Ensifer meliloti).